The primary structure comprises 579 residues: Protein inscuteable homolog (579 aa).

The important for interaction with GPSM2 stretch occupies residues 74–89; the sequence is SVQRWMEDLKLMTECE. The PDZ-binding signature appears at 576 to 579; the sequence is ESFV.

As to quaternary structure, interacts with ALS2CR19/PAR3B and F2RL2/PAR3. Interacts with GPSM1/AGS3 and GPSM2/LGN (via TPR repeat region). Identified in a complex with GPSM2 and F2RL2. As to expression, isoform 1 is expressed in various tissues with stronger expression in liver, kidney and small intestine. Isoform 2 is abundantly expressed in small intestine and to a lower extent in lung and pancreas.

It is found in the cytoplasm. The protein resides in the cell cortex. May function as an adapter linking the Par3 complex to the GPSM1/GPSM2 complex. Involved in spindle orientation during mitosis. May regulate cell proliferation and differentiation in the developing nervous system. May play a role in the asymmetric division of fibroblasts and participate in the process of stratification of the squamous epithelium. The chain is Protein inscuteable homolog (INSC) from Homo sapiens (Human).